We begin with the raw amino-acid sequence, 443 residues long: Mimosinase, chloroplastic (443 aa).

A chloroplast-targeting transit peptide spans 1–43; that stretch reads MALSSTFLNPLVSSVAVNPQPKITSGKGFRVNCLIRTQQTVIK. Tyr-105, Arg-107, Gly-135, Met-136, Ser-254, and Thr-256 together coordinate pyridoxal 5'-phosphate. Lys-257 carries the post-translational modification N6-(pyridoxal phosphate)lysine.

It belongs to the trans-sulfuration enzymes family. Forms homodimers. May form homotetramers from two homodimers. Pyridoxal 5'-phosphate serves as cofactor.

The protein resides in the plastid. It localises to the chloroplast. It catalyses the reaction L-mimosine + H2O = 3-hydroxy-4H-pyrid-4-one + pyruvate + NH4(+). Functionally, catalyzes the degradation of mimosine, which is a toxic secondary metabolite found in all Leucaena and Mimosa species. The polypeptide is Mimosinase, chloroplastic (Leucaena leucocephala (White popinac)).